The chain runs to 83 residues: Hainantoxin-III 7 (83 aa).

Residues 1 to 21 (MKASMFLALAGLVLLFVVGYA) form the signal peptide. A propeptide spanning residues 22 to 48 (SESEEKEFPRELLSKVFAVDDFKGEER) is cleaved from the precursor. Cystine bridges form between Cys50/Cys65, Cys57/Cys70, and Cys64/Cys77. Leu81 bears the Leucine amide mark.

It belongs to the neurotoxin 10 (Hwtx-1) family. 15 (Hntx-3) subfamily. In terms of assembly, monomer. Expressed by the venom gland.

The protein resides in the secreted. Selective antagonist of neuronal tetrodotoxin (TTX)-sensitive voltage-gated sodium channels (IC(50)=1270 nM on Nav1.1/SCN1A, 270 nM on Nav1.2/SCN2A, 491 nM on Nav1.3/SCN3A and 232 nM on Nav1.7/SCN9A). This toxin suppress Nav1.7 current amplitude without significantly altering the activation, inactivation, and repriming kinetics. Short extreme depolarizations partially activate the toxin-bound channel, indicating voltage-dependent inhibition of this toxin. This toxin increases the deactivation of the Nav1.7 current after extreme depolarizations. The toxin-Nav1.7 complex is gradually dissociated upon prolonged strong depolarizations in a voltage-dependent manner, and the unbound toxin rebinds to Nav1.7 after a long repolarization. Moreover, analysis of chimeric channels showed that the DIIS3-S4 linker is critical for toxin binding to Nav1.7. These data are consistent with this toxin interacting with Nav1.7 site 4 and trapping the domain II voltage sensor in the closed state. This chain is Hainantoxin-III 7, found in Cyriopagopus hainanus (Chinese bird spider).